An 81-amino-acid polypeptide reads, in one-letter code: D-alanyl carrier protein (81 aa).

The region spanning 1-81 is the Carrier domain; that stretch reads MADEAIKNGV…KIIAKVEQAQ (81 aa). Serine 39 is subject to O-(pantetheine 4'-phosphoryl)serine.

It belongs to the DltC family. Post-translationally, 4'-phosphopantetheine is transferred from CoA to a specific serine of apo-DCP.

The protein localises to the cytoplasm. It functions in the pathway cell wall biogenesis; lipoteichoic acid biosynthesis. Its function is as follows. Carrier protein involved in the D-alanylation of lipoteichoic acid (LTA). The loading of thioester-linked D-alanine onto DltC is catalyzed by D-alanine--D-alanyl carrier protein ligase DltA. The DltC-carried D-alanyl group is further transferred to cell membrane phosphatidylglycerol (PG) by forming an ester bond, probably catalyzed by DltD. D-alanylation of LTA plays an important role in modulating the properties of the cell wall in Gram-positive bacteria, influencing the net charge of the cell wall. The protein is D-alanyl carrier protein of Lacticaseibacillus rhamnosus (Lactobacillus rhamnosus).